The following is a 180-amino-acid chain: ATP synthase subunit b (180 aa).

A helical membrane pass occupies residues 15-35 (LIPEVPELVIGLLAFAIVFFV).

It belongs to the ATPase B chain family. As to quaternary structure, F-type ATPases have 2 components, F(1) - the catalytic core - and F(0) - the membrane proton channel. F(1) has five subunits: alpha(3), beta(3), gamma(1), delta(1), epsilon(1). F(0) has three main subunits: a(1), b(2) and c(10-14). The alpha and beta chains form an alternating ring which encloses part of the gamma chain. F(1) is attached to F(0) by a central stalk formed by the gamma and epsilon chains, while a peripheral stalk is formed by the delta and b chains.

The protein resides in the cell membrane. Its function is as follows. F(1)F(0) ATP synthase produces ATP from ADP in the presence of a proton or sodium gradient. F-type ATPases consist of two structural domains, F(1) containing the extramembraneous catalytic core and F(0) containing the membrane proton channel, linked together by a central stalk and a peripheral stalk. During catalysis, ATP synthesis in the catalytic domain of F(1) is coupled via a rotary mechanism of the central stalk subunits to proton translocation. Functionally, component of the F(0) channel, it forms part of the peripheral stalk, linking F(1) to F(0). This is ATP synthase subunit b from Streptomyces avermitilis (strain ATCC 31267 / DSM 46492 / JCM 5070 / NBRC 14893 / NCIMB 12804 / NRRL 8165 / MA-4680).